We begin with the raw amino-acid sequence, 414 residues long: tRNA (guanine-N(7)-)-methyltransferase non-catalytic subunit WDR4 (414 aa).

An N-acetylalanine modification is found at Ala2. WD repeat units lie at residues 60 to 99 (QGSD…CLSV), 101 to 140 (TVVR…GGGR), 144 to 184 (GHLS…IESF), and 187 to 227 (GHTE…ELHC). The tract at residues 377–414 (EERLQQQLEKKRRQAPPPGPNGPTKKMRAGELAQGCSS) is disordered.

Belongs to the WD repeat TRM82 family. Non-catalytic component of the METTL1-WDR4 complex, composed of METTL1 and WDR4. Interacts with FEN1; the interaction is direct.

The protein localises to the nucleus. The protein resides in the chromosome. Its pathway is tRNA modification; N(7)-methylguanine-tRNA biosynthesis. Non-catalytic component of the METTL1-WDR4 methyltransferase complex required for the formation of N(7)-methylguanine in a subset of RNA species, such as tRNAs, mRNAs and microRNAs (miRNAs). In the METTL1-WDR4 methyltransferase complex, WDR4 acts as a scaffold for tRNA-binding. Required for the formation of N(7)-methylguanine at position 46 (m7G46) in a large subset of tRNAs that contain the 5'-RAGGU-3' motif within the variable loop. M7G46 interacts with C13-G22 in the D-loop to stabilize tRNA tertiary structure and protect tRNAs from decay. Also required for the formation of N(7)-methylguanine at internal sites in a subset of mRNAs. Also required for methylation of a specific subset of miRNAs, such as let-7. Independently of METTL1, also plays a role in genome stability: localizes at the DNA replication site and regulates endonucleolytic activities of FEN1. The polypeptide is tRNA (guanine-N(7)-)-methyltransferase non-catalytic subunit WDR4 (Bos taurus (Bovine)).